A 283-amino-acid chain; its full sequence is MNQILNAQRLIQLSQFHPKLKNIWYLVAAATFSVCNEPQEIPKLYHYAMLLSNDNAHMYRFTLASQTIDLLRSELPMRKTLINENYQQPTFFQKQLTAKFREVILKTGPLAGLPRAINGLTMLKETTPDILVPHLDPIDPWEAAMGNSSPLSETSMRRKHDKTIQERDHTIQNGLRHWNSIYNKVSTRVVNNLNSSYPDLWYYTLVHVYGPLFAFDEILSAQETSLVIIASLVPQDVNPQLRGHLKGALNIGCDKETVEAVRGLAILISQWCGVSWKSGVVKL.

A Peroxisomal target signal 1 (PTS1) motif is present at residues 281-283 (VKL).

It belongs to the PXP2 family.

It localises to the peroxisome matrix. The protein resides in the cytoplasm. It is found in the cytosol. Its function is as follows. Probably involved in peroxisome formation or maintenance as well as in amino acid metabolism. In Saccharomyces cerevisiae (strain ATCC 204508 / S288c) (Baker's yeast), this protein is Peroxisomal protein 2.